Consider the following 1167-residue polypeptide: White collar 1 protein (1167 aa).

2 disordered regions span residues 1 to 91 and 307 to 355; these read MNNN…MSGG and STPA…GASQ. The span at 21-57 shows a compositional bias: low complexity; that stretch reads QHQQQQQQQQQQQQQQQQQQQQQQQQQQQQHQHQQQQ. 2 stretches are compositionally biased toward polar residues: residues 70-91 and 307-325; these read TPPT…MSGG and STPA…TQTI. The span at 335–348 shows a compositional bias: low complexity; that stretch reads VTNAPTPAPFTSTP. The 72-residue stretch at 381–452 folds into the PAS 1 domain; the sequence is KLKLGAVDMS…KREFVENNAV (72 aa). The residue at position 428 (C428) is an S-4a-FMN cysteine. The region spanning 469–508 is the PAC 1 domain; the sequence is LINYRKGGKPFLNLLTMIPIPWDTEEIRYFIGFQIDLVEC. The region spanning 574–644 is the PAS 2 domain; it reads KQSWDKMLLE…RELKEAQQHT (71 aa). In terms of domain architecture, PAC 2 spans 650–691; sequence FRIRRKNSGYTWFESHGTLFNEQGKGRKCIILVGRKRPVFAL. Residues 693–763 form the PAS 3 domain; sequence RKDLELNGGI…RTIEKARKGK (71 aa). Over residues 849-861 the composition is skewed to low complexity; the sequence is MSKSGSSDSTGAM. Disordered regions lie at residues 849–872, 918–952, 966–1047, and 1060–1167; these read MSKS…GPGQ, KKKR…PSGN, QTGR…TGST, and VNAL…GLSV. A GATA-type zinc finger spans residues 934-959; the sequence is CANCHTRNTPEWRRGPSGNRDLCNSC. A compositionally biased stretch (polar residues) spans 968 to 977; it reads GRVSPRTSSR. Residues 986 to 995 show a composition bias toward low complexity; the sequence is KKSNSPSHSS. A compositionally biased stretch (polar residues) spans 1004-1033; it reads DSPSTTTATKNSPSLRGSSTTAPGTITTDS. Low complexity-rich tracts occupy residues 1036-1047 and 1104-1128; these read AVASSASGTGST and QHQQ…QQHQ.

As to quaternary structure, heterodimer of wc-1 and wc-2. FMN binds covalently to cysteine after exposure to blue light and is reversed in the dark.

The protein localises to the nucleus. Functionally, may function as a transcription factor involved in light regulation. Binds and affects blue light regulation of the al-3 gene. Wc-1 and wc-2 proteins interact via homologous PAS domains, bind to promoters of light regulated genes such as frq, and activate transcription. This Neurospora crassa (strain ATCC 24698 / 74-OR23-1A / CBS 708.71 / DSM 1257 / FGSC 987) protein is White collar 1 protein (wc-1).